Here is a 244-residue protein sequence, read N- to C-terminus: MDLGLAGRRALVTGAGKGIGRSTVLALQAAGAHVVAVSRTQADLDSLVSECPGVETVCVDLADWEATEQALSSVGPVDLLVNNAAVALLQPFLEVTKEAFDMSFNVNLRAVIQVSQIVARGMIARGAPGAIVNVSSQASQRALANHSVYCSTKGALDMLTKMMALELGPHKIRVNAVNPTVVMTSMGRTNWSDPHKAKVMLDRIPLGKFAEVENVVDAILFLLSHRSNMTTGSTLPVDGGFLVT.

Residue Met1 is modified to N-acetylmethionine. NADP(+) is bound at residue 11–39 (LVTGAGKGIGRSTVLALQAAGAHVVAVSR). An Omega-N-methylarginine modification is found at Arg21. The residue at position 46 (Ser46) is a Phosphoserine. Residue Ser136 coordinates substrate. Tyr149 (proton acceptor) is an active-site residue. Residue Lys153 is part of the active site.

The protein belongs to the short-chain dehydrogenases/reductases (SDR) family. Homotetramer. As to expression, highly expressed in kidney and liver. Expressed in epididymis. Weakly expressed in brain, heart, lung, spleen and testis.

Its subcellular location is the membrane. The protein resides in the cytoplasmic vesicle. The protein localises to the secretory vesicle. It localises to the acrosome. It carries out the reaction xylitol + NADP(+) = L-xylulose + NADPH + H(+). In terms of biological role, catalyzes the NADPH-dependent reduction of several pentoses, tetroses, trioses, alpha-dicarbonyl compounds and L-xylulose. Participates in the uronate cycle of glucose metabolism. May play a role in the water absorption and cellular osmoregulation in the proximal renal tubules by producing xylitol, an osmolyte, thereby preventing osmolytic stress from occurring in the renal tubules. This is L-xylulose reductase (DCXR) from Mesocricetus auratus (Golden hamster).